A 509-amino-acid polypeptide reads, in one-letter code: Cysteine--tRNA ligase (509 aa).

Cysteine 19 contributes to the Zn(2+) binding site. Positions 21–31 match the 'HIGH' region motif; that stretch reads PTVYNDAHIGH. Positions 213, 238, and 242 each coordinate Zn(2+). Positions 284-288 match the 'KMSKS' region motif; that stretch reads KMSKS. ATP is bound at residue lysine 287.

Belongs to the class-I aminoacyl-tRNA synthetase family. Requires Zn(2+) as cofactor.

It carries out the reaction tRNA(Cys) + L-cysteine + ATP = L-cysteinyl-tRNA(Cys) + AMP + diphosphate. The sequence is that of Cysteine--tRNA ligase (CARS) from Acanthamoeba polyphaga (Amoeba).